Consider the following 141-residue polypeptide: Nucleoside triphosphatase NudI (141 aa).

The Nudix hydrolase domain occupies 1 to 141; sequence MRQRTIVCPI…RLTFTQKGLL (141 aa). Positions 38 to 59 match the Nudix box motif; sequence GGMEPGETMEEALRREIREELG.

It belongs to the Nudix hydrolase family. NudI subfamily. In terms of assembly, monomer. Mg(2+) is required as a cofactor.

It carries out the reaction a ribonucleoside 5'-triphosphate + H2O = a ribonucleoside 5'-phosphate + diphosphate + H(+). The enzyme catalyses a 2'-deoxyribonucleoside 5'-triphosphate + H2O = a 2'-deoxyribonucleoside 5'-phosphate + diphosphate + H(+). The catalysed reaction is dUTP + H2O = dUMP + diphosphate + H(+). It catalyses the reaction dTTP + H2O = dTMP + diphosphate + H(+). It carries out the reaction dCTP + H2O = dCMP + diphosphate + H(+). Functionally, catalyzes the hydrolysis of nucleoside triphosphates, with a preference for pyrimidine deoxynucleoside triphosphates (dUTP, dTTP and dCTP). This chain is Nucleoside triphosphatase NudI, found in Enterobacter sp. (strain 638).